A 396-amino-acid chain; its full sequence is Calcium-responsive transactivator (396 aa).

The tract at residues 1–148 is N-terminal auto-inhibitory domain; necessary for interaction with SMARCA4/BRG1; it reads MSVAFASARP…TLPTTSMSIS (148 aa). The SH2-binding signature appears at 50–53; it reads YQQI. 3 disordered regions span residues 72–162, 192–280, and 311–396; these read QSLL…SQGV, QAAT…GDYA, and SQQQ…NYQQ. Positions 90 to 106 are enriched in low complexity; it reads LTQSGSSQGLHSQGSLS. 2 stretches are compositionally biased toward polar residues: residues 107 to 122 and 128 to 147; these read DAIS…LQGQ and SHVS…SMSI. Residues 149–232 are methionine-rich intra-molecular domain; sequence GPGYSHAGPA…GSSMMGQRPM (84 aa). Low complexity-rich tracts occupy residues 199 to 229, 238 to 261, and 311 to 369; these read SSAQ…MMGQ, SQQG…SHSQ, and SQQQ…YGSY. The tract at residues 246 to 317 is MFD domain; that stretch reads YLGQEEYYGE…SQYSQQQAGY (72 aa). A necessary for nuclear localization region spans residues 334-396; that stretch reads SQQSYPGQQQ…EQGQYGNYQQ (63 aa). The SH2-binding signature appears at 353–356; it reads SQYP. An SH3-binding motif is present at residues 371–379; sequence APQTAPSAQ. Over residues 384–396 the composition is skewed to low complexity; it reads YGYEQGQYGNYQQ. Positions 387–396 are necessary for interaction with CREBBP and for the recruitment of CREBBP to the nuclear bodies; the sequence is EQGQYGNYQQ. The short motif at 391-394 is the SH2-binding element; the sequence is YGNY.

This sequence belongs to the SS18 family. Homodimer. Dimerization may be necessary for its function in neuronal dendritic development. Interacts (via C-terminus) with CREBBP (via N-terminus), EP300 and SMARCA4/BRG1. Interacts with the nBAF complex. Association with CREBBP facilitates transcription while the association with SMARCA4/BRG1 suppresses CREST-mediated transcription in resting neurons. Ubiquitous; with lowest levels in spleen.

It is found in the nucleus. The protein localises to the chromosome. Its subcellular location is the centromere. The protein resides in the kinetochore. Transcriptional activator which is required for calcium-dependent dendritic growth and branching in cortical neurons. Recruits CREB-binding protein (CREBBP) to nuclear bodies. Component of the CREST-BRG1 complex, a multiprotein complex that regulates promoter activation by orchestrating a calcium-dependent release of a repressor complex and a recruitment of an activator complex. In resting neurons, transcription of the c-FOS promoter is inhibited by BRG1-dependent recruitment of a phospho-RB1-HDAC1 repressor complex. Upon calcium influx, RB1 is dephosphorylated by calcineurin, which leads to release of the repressor complex. At the same time, there is increased recruitment of CREBBP to the promoter by a CREST-dependent mechanism, which leads to transcriptional activation. The CREST-BRG1 complex also binds to the NR2B promoter, and activity-dependent induction of NR2B expression involves a release of HDAC1 and recruitment of CREBBP. This chain is Calcium-responsive transactivator (SS18L1), found in Homo sapiens (Human).